We begin with the raw amino-acid sequence, 303 residues long: N-acetyl-D-glucosamine kinase (303 aa).

ATP contacts are provided by residues 4–11 and 133–140; these read GFDIGGTK and GVGGGLVL. Residues His157, Cys177, Cys179, and Cys184 each coordinate Zn(2+).

Belongs to the ROK (NagC/XylR) family. NagK subfamily.

The catalysed reaction is N-acetyl-D-glucosamine + ATP = N-acetyl-D-glucosamine 6-phosphate + ADP + H(+). Its pathway is cell wall biogenesis; peptidoglycan recycling. Its function is as follows. Catalyzes the phosphorylation of N-acetyl-D-glucosamine (GlcNAc) derived from cell-wall degradation, yielding GlcNAc-6-P. The sequence is that of N-acetyl-D-glucosamine kinase from Salmonella heidelberg (strain SL476).